The following is a 433-amino-acid chain: Hps1-dma1 cluster O-methyltransferase (433 aa).

A disordered region spans residues 36-55; that stretch reads NGHPERSLNSTDSVRLSDAP. Residue Asp-285 coordinates S-adenosyl-L-methionine. His-331 serves as the catalytic Proton acceptor.

The protein belongs to the class I-like SAM-binding methyltransferase superfamily. Cation-independent O-methyltransferase family. COMT subfamily.

Its pathway is secondary metabolite biosynthesis. Functionally, O-methyltransferase; part of the hps1-dma1 gene cluster that probably mediates the biosynthesis a derivative of cyclopiazonic acid (CPA). The hybrid polyketide synthase-nonribosomal peptide synthetase (PKS-NRPS) nps1 might incorporates acetyl-CoA, malonyl-CoA, and tryptophan (Trp) and utilizes a C-terminal redox-incompetent reductase domain to make and release the tryptophan tetramic acid, cyclo-acetoacetyl-L-tryptophan (c-AATrp), as the first intermediate in the pathway. In addition, the cluster also includes the tryptophan dimethylallyltransferase dma1, the FAD-dependent oxidoreductase toxD, the cytochrome P450 monooxygenase cyp3.1 and the methyltransferase DOTSEDRAFT_139328; the latter 2 being not present in all CPA-producing fungi but involved in additional modifications that occur in biosynthesis the of a range of CPA and CPA-like products. Further studies are required to clarify whether the CPA-like hps1-dma1 cluster is functional or a non-functional relic reflecting evolution of D.septosporum. This is Hps1-dma1 cluster O-methyltransferase from Dothistroma septosporum (strain NZE10 / CBS 128990) (Red band needle blight fungus).